A 986-amino-acid polypeptide reads, in one-letter code: Regulator of telomere elongation helicase 1 homolog (986 aa).

A Helicase ATP-binding domain is found at 7 to 326 (AGIPVHFPFE…KEMLLELEKA (320 aa)). Position 42–49 (42–49 (SPTGTGKT)) interacts with ATP. [4Fe-4S] cluster is bound by residues Cys148, Cys166, Cys175, and Cys211. Positions 254-257 (DEGH) match the DEAH box motif. The residue at position 875 (Thr875) is a Phosphothreonine.

The protein belongs to the helicase family. RAD3/XPD subfamily.

Its subcellular location is the nucleus. The enzyme catalyses ATP + H2O = ADP + phosphate + H(+). A probable ATP-dependent DNA helicase implicated in DNA repair and the maintenance of genomic stability. Acts as an anti-recombinase to counteract toxic recombination and limit crossover during meiosis. Regulates meiotic recombination and crossover homeostasis by physically dissociating strand invasion events and thereby promotes noncrossover repair by meiotic synthesis dependent strand annealing (SDSA) as well as disassembly of D loop recombination intermediates. The protein is Regulator of telomere elongation helicase 1 homolog of Drosophila grimshawi (Hawaiian fruit fly).